Consider the following 188-residue polypeptide: Threonylcarbamoyl-AMP synthase (188 aa).

The 185-residue stretch at valine 4–glycine 188 folds into the YrdC-like domain.

The protein belongs to the SUA5 family. TsaC subfamily.

It is found in the cytoplasm. The enzyme catalyses L-threonine + hydrogencarbonate + ATP = L-threonylcarbamoyladenylate + diphosphate + H2O. Functionally, required for the formation of a threonylcarbamoyl group on adenosine at position 37 (t(6)A37) in tRNAs that read codons beginning with adenine. Catalyzes the conversion of L-threonine, HCO(3)(-)/CO(2) and ATP to give threonylcarbamoyl-AMP (TC-AMP) as the acyladenylate intermediate, with the release of diphosphate. This chain is Threonylcarbamoyl-AMP synthase, found in Vibrio cholerae serotype O1 (strain ATCC 39541 / Classical Ogawa 395 / O395).